We begin with the raw amino-acid sequence, 719 residues long: Protein STRUBBELIG-RECEPTOR FAMILY 6 (719 aa).

A signal peptide spans 1–29 (MRENWAVVALFTLCIVGFELRFIHGATDA). The Extracellular portion of the chain corresponds to 30 to 293 (SDTSALNTLF…SKKSGIGAGA (264 aa)). LRR repeat units lie at residues 97–118 (SLTELDLSSNNLGGDLPYQFPP), 119–140 (NLQRLNLANNQFTGAASYSLSQ), 143–164 (PLKYLNLGHNQFKGQIAIDFSK), 167–190 (SLTTLDFSFNSFTNSLPATFSSLT), 191–213 (SLKSLYLQNNQFSGTVDVLAGLP), and 214–234 (LETLNIANNDFTGWIPSSLKG). The disordered stretch occupies residues 242–287 (NSFNTGPAPPPPPGTPPIRGSPSRKSGGRESRSSDESTRNGDSKKS). Residues 248 to 257 (PAPPPPPGTP) show a composition bias toward pro residues. Residues 268–286 (GGRESRSSDESTRNGDSKK) are compositionally biased toward basic and acidic residues. The helical transmembrane segment at 294-314 (IAGIIISLLVVTALLVAFFLF) threads the bilayer. Residues 315–719 (RRKKSKRSSP…GSADTTSDYM (405 aa)) are Cytoplasmic-facing. 2 disordered regions span residues 322-355 (SSPMDIEKTDNQPFTLASNDFHENNSIQSSSSVE) and 364-383 (SINLRPPPIDRNKSFDDEDS). The span at 332 to 354 (NQPFTLASNDFHENNSIQSSSSV) shows a compositional bias: polar residues. Phosphoserine is present on Ser377. Residues 416-690 (FSVDNLLGEG…SEVVQALVVL (275 aa)) enclose the Protein kinase domain. Residues 422-430 (LGEGTFGRV) and Lys444 each bind ATP. Residues 700–719 (TVGVDPSQRAGSADTTSDYM) form a disordered region. Positions 708-719 (RAGSADTTSDYM) are enriched in polar residues.

Belongs to the protein kinase superfamily. Ser/Thr protein kinase family. Expressed in seedlings, roots, stems, leaves, flowers and siliques.

Its subcellular location is the membrane. The polypeptide is Protein STRUBBELIG-RECEPTOR FAMILY 6 (SRF6) (Arabidopsis thaliana (Mouse-ear cress)).